Reading from the N-terminus, the 349-residue chain is Glycerol-3-phosphate dehydrogenase [NAD(+)], cytoplasmic (349 aa).

Position 10-15 (10-15 (GSGNWG)) interacts with NAD(+). Lys-120 contacts substrate. Ala-153 contacts NAD(+). Catalysis depends on Lys-204, which acts as the Proton acceptor. Arg-269 serves as a coordination point for NAD(+). 269-270 (RN) contacts substrate. Lys-289 carries the post-translational modification N6-succinyllysine. Lys-296 and Gln-298 together coordinate NAD(+). At Tyr-326 the chain carries Phosphotyrosine.

It belongs to the NAD-dependent glycerol-3-phosphate dehydrogenase family. As to quaternary structure, homodimer.

The protein resides in the cytoplasm. The enzyme catalyses sn-glycerol 3-phosphate + NAD(+) = dihydroxyacetone phosphate + NADH + H(+). Has glycerol-3-phosphate dehydrogenase activity. The chain is Glycerol-3-phosphate dehydrogenase [NAD(+)], cytoplasmic (GPD1) from Bos taurus (Bovine).